The chain runs to 394 residues: Upstream-binding factor 1-like protein 1 (394 aa).

The HMG box 1 DNA-binding region spans 101-169 (PKRPLTAYLR…DFQKKMRQFK (69 aa)). Residues 167-180 (QFKKRHPVSGHPKK) are compositionally biased toward basic residues. Residues 167–197 (QFKKRHPVSGHPKKSVVPQSHPTKVPTKSQG) form a disordered region. The segment covering 183-197 (VPQSHPTKVPTKSQG) has biased composition (polar residues). A DNA-binding region (HMG box 2) is located at residues 225-291 (RKPPMNAYHK…QYRVKLDLWL (67 aa)). Positions 305–394 (AKATCGKRKN…SDSSSTDEDD (90 aa)) are disordered.

Its subcellular location is the cytoplasm. The protein resides in the nucleus. Functionally, essential for proliferation of the inner cell mass and trophectodermal cells in peri-implantation development. In Mus musculus (Mouse), this protein is Upstream-binding factor 1-like protein 1.